The sequence spans 103 residues: Histone H4 (103 aa).

At lysine 6 the chain carries N6-acetyl-N6-methyllysine; alternate. Residues lysine 6, lysine 9, and lysine 13 each carry the N6-methyllysine; alternate modification. Residue lysine 13 is modified to N6-acetyl-N6-methyllysine; alternate. Residues 17–21 (KRHRK) mediate DNA binding. N6-glutaryllysine is present on lysine 92.

The protein belongs to the histone H4 family. The nucleosome is a histone octamer containing two molecules each of H2A, H2B, H3 and H4 assembled in one H3-H4 heterotetramer and two H2A-H2B heterodimers. The octamer wraps approximately 147 bp of DNA. Post-translationally, glutarylation at Lys-92 (H4K91glu) destabilizes nucleosomes by promoting dissociation of the H2A-H2B dimers from nucleosomes.

It is found in the nucleus. The protein resides in the chromosome. Functionally, core component of nucleosome. Nucleosomes wrap and compact DNA into chromatin, limiting DNA accessibility to the cellular machineries which require DNA as a template. Histones thereby play a central role in transcription regulation, DNA repair, DNA replication and chromosomal stability. DNA accessibility is regulated via a complex set of post-translational modifications of histones, also called histone code, and nucleosome remodeling. The polypeptide is Histone H4 (H4.1) (Mortierella alpina (Oleaginous fungus)).